Here is a 174-residue protein sequence, read N- to C-terminus: NAD(P)H-quinone oxidoreductase subunit J (174 aa).

Belongs to the complex I 30 kDa subunit family. As to quaternary structure, NDH-1 can be composed of about 15 different subunits; different subcomplexes with different compositions have been identified which probably have different functions.

Its subcellular location is the cellular thylakoid membrane. The enzyme catalyses a plastoquinone + NADH + (n+1) H(+)(in) = a plastoquinol + NAD(+) + n H(+)(out). The catalysed reaction is a plastoquinone + NADPH + (n+1) H(+)(in) = a plastoquinol + NADP(+) + n H(+)(out). Its function is as follows. NDH-1 shuttles electrons from an unknown electron donor, via FMN and iron-sulfur (Fe-S) centers, to quinones in the respiratory and/or the photosynthetic chain. The immediate electron acceptor for the enzyme in this species is believed to be plastoquinone. Couples the redox reaction to proton translocation, and thus conserves the redox energy in a proton gradient. Cyanobacterial NDH-1 also plays a role in inorganic carbon-concentration. The protein is NAD(P)H-quinone oxidoreductase subunit J of Picosynechococcus sp. (strain ATCC 27264 / PCC 7002 / PR-6) (Agmenellum quadruplicatum).